The primary structure comprises 153 residues: Pheromone-binding protein Gp-9 (153 aa).

A signal peptide spans 1–19; it reads MKTFVLHIFIFAFVAFASA. Intrachain disulfides connect Cys-37–Cys-77, Cys-73–Cys-129, and Cys-118–Cys-138.

The protein belongs to the PBP/GOBP family. In terms of assembly, homodimer.

The protein localises to the secreted. In terms of biological role, colony queen number, a major feature of social organization, is associated with worker genotype for Gp-9. Colonies are headed by either a single reproductive queen (monogyne form) or multiple queens (polygyne form). Differences in worker Gp-9 genotypes between social forms may cause differences in workers' abilities to recognize queens and regulate their numbers. The protein is Pheromone-binding protein Gp-9 of Solenopsis geminata (Tropical fire ant).